The primary structure comprises 338 residues: UDP-3-O-acylglucosamine N-acyltransferase (338 aa).

His-251 acts as the Proton acceptor in catalysis.

The protein belongs to the transferase hexapeptide repeat family. LpxD subfamily. As to quaternary structure, homotrimer.

It carries out the reaction a UDP-3-O-[(3R)-3-hydroxyacyl]-alpha-D-glucosamine + a (3R)-hydroxyacyl-[ACP] = a UDP-2-N,3-O-bis[(3R)-3-hydroxyacyl]-alpha-D-glucosamine + holo-[ACP] + H(+). It functions in the pathway bacterial outer membrane biogenesis; LPS lipid A biosynthesis. Its function is as follows. Catalyzes the N-acylation of UDP-3-O-acylglucosamine using 3-hydroxyacyl-ACP as the acyl donor. Is involved in the biosynthesis of lipid A, a phosphorylated glycolipid that anchors the lipopolysaccharide to the outer membrane of the cell. This Psychrobacter cryohalolentis (strain ATCC BAA-1226 / DSM 17306 / VKM B-2378 / K5) protein is UDP-3-O-acylglucosamine N-acyltransferase.